Consider the following 479-residue polypeptide: FAD-dependent monooxygenase sdcF (479 aa).

The 174-residue stretch at 40-213 folds into the FAD-binding PCMH-type domain; that stretch reads AQLPPSCFVL…TLFDMEAFST (174 aa). At His-79 the chain carries Pros-8alpha-FAD histidine.

This sequence belongs to the oxygen-dependent FAD-linked oxidoreductase family. It depends on FAD as a cofactor.

The protein operates within secondary metabolite biosynthesis. Its function is as follows. FAD-dependent monooxygenase; part of the gene cluster that mediates the biosynthesis of the polyenes aspernidgulenes. The carbon backbone of aspernidgulenes is synthesized by the HR-PKS sdgA, which accepts acetyl-CoA as the starter unit and performs malonyl-CoA extensions as well as regioselective methylation and reduction. The resulting nonaketide offloads the HR-PKS by intramolecular lactonization to yield the 5,6-dihydro-alpha-pyrone-containing hexaenoic acids preaspernidgulene A1 and A2. The FAD-dependent monooxygenase sdgC then installs the first epoxide on the penultimate double bond. Subsequently, the FAD-dependent monooxygenase sdgF presumably generates a ketone intermediate through Meinwald rearrangement involving a hydride shift. Next, sdgC introduces another epoxide on the last olefin of the ketone intermediate after E/Z isomerization. The epoxide hydrolase sdgD then catalyzes stereospecific cyclization of the 5,6-dihydro-alpha-pyrone and opening of the epoxide ring to form an oxygenated trimethylcyclopentanone and an oxabicyclo[2.2.1]heptane unit. Finally, the bicyclic unit undergoes hydrolytic cleavage, either spontaneously or catalyzed by sdgD, to assemble the dimethyl-gamma-lactone moiety in aspernidgulene A1. The chain is FAD-dependent monooxygenase sdcF from Emericella nidulans (strain FGSC A4 / ATCC 38163 / CBS 112.46 / NRRL 194 / M139) (Aspergillus nidulans).